The primary structure comprises 61 residues: Large ribosomal subunit protein uL30 (61 aa).

Belongs to the universal ribosomal protein uL30 family. As to quaternary structure, part of the 50S ribosomal subunit.

The protein is Large ribosomal subunit protein uL30 of Nitrosomonas eutropha (strain DSM 101675 / C91 / Nm57).